Here is a 128-residue protein sequence, read N- to C-terminus: Small ribosomal subunit protein uS9 (128 aa).

The interval 107 to 128 (RAVERKKPGRPKARKRFQFSKR) is disordered. Positions 113 to 128 (KPGRPKARKRFQFSKR) are enriched in basic residues.

It belongs to the universal ribosomal protein uS9 family.

In Parabacteroides distasonis (strain ATCC 8503 / DSM 20701 / CIP 104284 / JCM 5825 / NCTC 11152), this protein is Small ribosomal subunit protein uS9.